A 971-amino-acid polypeptide reads, in one-letter code: Exportin-2 (971 aa).

Met1 is subject to N-acetylmethionine. In terms of domain architecture, Importin N-terminal spans 29–102 (AEKFLESVEG…KANIVHLMLS (74 aa)). Ser112 carries the post-translational modification Phosphoserine. An N6-acetyllysine mark is found at Lys574 and Lys824. Phosphoserine is present on Ser931.

It belongs to the XPO2/CSE1 family. As to quaternary structure, found in a complex with CSE1L/XPO2, Ran and KPNA2. Binds with high affinity to importin-alpha only in the presence of RanGTP. The complex is dissociated by the combined action of RanBP1 and RanGAP1. Interacts with CFTR.

Its subcellular location is the cytoplasm. The protein localises to the nucleus. Export receptor for importin-alpha. Mediates importin-alpha re-export from the nucleus to the cytoplasm after import substrates (cargos) have been released into the nucleoplasm. In the nucleus binds cooperatively to importin-alpha and to the GTPase Ran in its active GTP-bound form. Docking of this trimeric complex to the nuclear pore complex (NPC) is mediated through binding to nucleoporins. Upon transit of a nuclear export complex into the cytoplasm, disassembling of the complex and hydrolysis of Ran-GTP to Ran-GDP (induced by RANBP1 and RANGAP1, respectively) cause release of the importin-alpha from the export receptor. CSE1L/XPO2 then return to the nuclear compartment and mediate another round of transport. The directionality of nuclear export is thought to be conferred by an asymmetric distribution of the GTP- and GDP-bound forms of Ran between the cytoplasm and nucleus. This is Exportin-2 (CSE1L) from Pongo abelii (Sumatran orangutan).